A 47-amino-acid chain; its full sequence is Small, acid-soluble spore protein N (47 aa).

Polar residues-rich tracts occupy residues M1–F11 and K29–E47. The segment at M1–E47 is disordered.

Belongs to the SspN family.

The protein localises to the spore core. The sequence is that of Small, acid-soluble spore protein N from Anoxybacillus flavithermus (strain DSM 21510 / WK1).